Consider the following 100-residue polypeptide: uncharacterized protein (100 aa).

The chain crosses the membrane as a helical span at residues 62-82 (IPIVIIVSIFILLIIGSISLY).

The protein resides in the membrane. This is an uncharacterized protein from Dictyostelium discoideum (Social amoeba).